The following is a 218-amino-acid chain: uncharacterized protein (218 aa).

A run of 4 helical transmembrane segments spans residues 10-30, 55-75, 147-167, and 175-195; these read IPPL…SLGI, IGVG…GYSI, VTGG…AGMA, and FSWI…ILLR.

This sequence belongs to the DedA family.

It localises to the cell membrane. This is an uncharacterized protein from Mycobacterium tuberculosis (strain CDC 1551 / Oshkosh).